Consider the following 223-residue polypeptide: MDKLNRLEEHLGYKFKNKTLLKEALTHKSMKSSVNNERLEFLGDAVLDLIVGEYLFFKFKDTDEGNLSKLRAALVNEKSFASISSQIRLGDFLYLSAAEDNNNGRNKPSLVSDALEALMGAIYLESGLEAVKKIFINLLESQYNNIDLQSLGKDYKTTLQEITQARFGVTPRYELVSSSGPDHKKSFEMAVFLNDKELARAIGNSKKEAEQSAAWKVLQGMNI.

Residues 4 to 127 form the RNase III domain; it reads LNRLEEHLGY…LMGAIYLESG (124 aa). Glu-40 is a binding site for Mg(2+). Residue Asp-44 is part of the active site. 2 residues coordinate Mg(2+): Asp-113 and Glu-116. The active site involves Glu-116. Residues 154–223 form the DRBM domain; it reads DYKTTLQEIT…AWKVLQGMNI (70 aa).

Belongs to the ribonuclease III family. Homodimer. The cofactor is Mg(2+).

It is found in the cytoplasm. The catalysed reaction is Endonucleolytic cleavage to 5'-phosphomonoester.. Digests double-stranded RNA. Involved in the processing of primary rRNA transcript to yield the immediate precursors to the large and small rRNAs (23S and 16S). Processes some mRNAs, and tRNAs when they are encoded in the rRNA operon. Processes pre-crRNA and tracrRNA of type II CRISPR loci if present in the organism. This Campylobacter fetus subsp. fetus (strain 82-40) protein is Ribonuclease 3.